The following is a 98-amino-acid chain: Plastocyanin (98 aa).

The 98-residue stretch at 1–98 (AAIVKLGGDD…AGMKMTITVQ (98 aa)) folds into the Plastocyanin-like domain. Cu cation is bound by residues His-38, Cys-83, His-86, and Met-91.

This sequence belongs to the plastocyanin family. It depends on Cu(2+) as a cofactor.

The protein localises to the plastid. It is found in the chloroplast thylakoid membrane. In terms of biological role, participates in electron transfer between P700 and the cytochrome b6-f complex in photosystem I. The protein is Plastocyanin (PETE) of Ulva prolifera (Green seaweed).